A 20-amino-acid polypeptide reads, in one-letter code: Cytochrome c oxidase subunit 8B, mitochondrial (20 aa).

Belongs to the cytochrome c oxidase VIII family. Component of the cytochrome c oxidase (complex IV, CIV), a multisubunit enzyme composed of 14 subunits. The complex is composed of a catalytic core of 3 subunits MT-CO1, MT-CO2 and MT-CO3, encoded in the mitochondrial DNA, and 11 supernumerary subunits COX4I, COX5A, COX5B, COX6A, COX6B, COX6C, COX7A, COX7B, COX7C, COX8 and NDUFA4, which are encoded in the nuclear genome. The complex exists as a monomer or a dimer and forms supercomplexes (SCs) in the inner mitochondrial membrane with NADH-ubiquinone oxidoreductase (complex I, CI) and ubiquinol-cytochrome c oxidoreductase (cytochrome b-c1 complex, complex III, CIII), resulting in different assemblies (supercomplex SCI(1)III(2)IV(1) and megacomplex MCI(2)III(2)IV(2)).

Its subcellular location is the mitochondrion inner membrane. The protein operates within energy metabolism; oxidative phosphorylation. Functionally, component of the cytochrome c oxidase, the last enzyme in the mitochondrial electron transport chain which drives oxidative phosphorylation. The respiratory chain contains 3 multisubunit complexes succinate dehydrogenase (complex II, CII), ubiquinol-cytochrome c oxidoreductase (cytochrome b-c1 complex, complex III, CIII) and cytochrome c oxidase (complex IV, CIV), that cooperate to transfer electrons derived from NADH and succinate to molecular oxygen, creating an electrochemical gradient over the inner membrane that drives transmembrane transport and the ATP synthase. Cytochrome c oxidase is the component of the respiratory chain that catalyzes the reduction of oxygen to water. Electrons originating from reduced cytochrome c in the intermembrane space (IMS) are transferred via the dinuclear copper A center (CU(A)) of subunit 2 and heme A of subunit 1 to the active site in subunit 1, a binuclear center (BNC) formed by heme A3 and copper B (CU(B)). The BNC reduces molecular oxygen to 2 water molecules using 4 electrons from cytochrome c in the IMS and 4 protons from the mitochondrial matrix. This is Cytochrome c oxidase subunit 8B, mitochondrial from Thunnus obesus (Bigeye tuna).